Here is a 451-residue protein sequence, read N- to C-terminus: Probable phosphoglucosamine mutase (451 aa).

Residue serine 96 is the Phosphoserine intermediate of the active site. Serine 96, aspartate 233, aspartate 235, and aspartate 237 together coordinate Mg(2+). At serine 96 the chain carries Phosphoserine.

The protein belongs to the phosphohexose mutase family. Requires Mg(2+) as cofactor. In terms of processing, activated by phosphorylation.

It catalyses the reaction alpha-D-glucosamine 1-phosphate = D-glucosamine 6-phosphate. Its function is as follows. Catalyzes the conversion of glucosamine-6-phosphate to glucosamine-1-phosphate. The sequence is that of Probable phosphoglucosamine mutase from Pyrococcus horikoshii (strain ATCC 700860 / DSM 12428 / JCM 9974 / NBRC 100139 / OT-3).